We begin with the raw amino-acid sequence, 33 residues long: Large ribosomal subunit protein eL28 (33 aa).

Belongs to the eukaryotic ribosomal protein eL28 family. As to quaternary structure, component of the large ribosomal subunit.

The protein localises to the cytoplasm. Its function is as follows. Component of the large ribosomal subunit. The ribosome is a large ribonucleoprotein complex responsible for the synthesis of proteins in the cell. The chain is Large ribosomal subunit protein eL28 (rpl28) from Xenopus laevis (African clawed frog).